The sequence spans 620 residues: 1-deoxy-D-xylulose-5-phosphate synthase (620 aa).

Thiamine diphosphate is bound by residues His-80 and 121 to 123 (GHS). Position 152 (Asp-152) interacts with Mg(2+). Thiamine diphosphate is bound by residues 153–154 (GA), Asn-181, Tyr-288, and Glu-370. Mg(2+) is bound at residue Asn-181.

This sequence belongs to the transketolase family. DXPS subfamily. In terms of assembly, homodimer. The cofactor is Mg(2+). Thiamine diphosphate is required as a cofactor.

It carries out the reaction D-glyceraldehyde 3-phosphate + pyruvate + H(+) = 1-deoxy-D-xylulose 5-phosphate + CO2. It participates in metabolic intermediate biosynthesis; 1-deoxy-D-xylulose 5-phosphate biosynthesis; 1-deoxy-D-xylulose 5-phosphate from D-glyceraldehyde 3-phosphate and pyruvate: step 1/1. Functionally, catalyzes the acyloin condensation reaction between C atoms 2 and 3 of pyruvate and glyceraldehyde 3-phosphate to yield 1-deoxy-D-xylulose-5-phosphate (DXP). This Escherichia coli O157:H7 protein is 1-deoxy-D-xylulose-5-phosphate synthase.